Consider the following 431-residue polypeptide: Histidinol dehydrogenase (431 aa).

Residues tyrosine 127, glutamine 189, and asparagine 212 each coordinate NAD(+). Substrate-binding residues include serine 237, glutamine 259, and histidine 262. Residues glutamine 259 and histidine 262 each coordinate Zn(2+). Catalysis depends on proton acceptor residues glutamate 326 and histidine 327. Positions 327, 360, 414, and 419 each coordinate substrate. Aspartate 360 is a Zn(2+) binding site. Histidine 419 lines the Zn(2+) pocket.

The protein belongs to the histidinol dehydrogenase family. Zn(2+) is required as a cofactor.

It catalyses the reaction L-histidinol + 2 NAD(+) + H2O = L-histidine + 2 NADH + 3 H(+). The protein operates within amino-acid biosynthesis; L-histidine biosynthesis; L-histidine from 5-phospho-alpha-D-ribose 1-diphosphate: step 9/9. Catalyzes the sequential NAD-dependent oxidations of L-histidinol to L-histidinaldehyde and then to L-histidine. This chain is Histidinol dehydrogenase, found in Xanthomonas axonopodis pv. citri (strain 306).